The sequence spans 150 residues: D-aminoacyl-tRNA deacylase (150 aa).

Residues Gly-138 to Pro-139 carry the Gly-cisPro motif, important for rejection of L-amino acids motif.

Belongs to the DTD family. Homodimer.

Its subcellular location is the cytoplasm. The catalysed reaction is glycyl-tRNA(Ala) + H2O = tRNA(Ala) + glycine + H(+). It catalyses the reaction a D-aminoacyl-tRNA + H2O = a tRNA + a D-alpha-amino acid + H(+). An aminoacyl-tRNA editing enzyme that deacylates mischarged D-aminoacyl-tRNAs. Also deacylates mischarged glycyl-tRNA(Ala), protecting cells against glycine mischarging by AlaRS. Acts via tRNA-based rather than protein-based catalysis; rejects L-amino acids rather than detecting D-amino acids in the active site. By recycling D-aminoacyl-tRNA to D-amino acids and free tRNA molecules, this enzyme counteracts the toxicity associated with the formation of D-aminoacyl-tRNA entities in vivo and helps enforce protein L-homochirality. In Parabacteroides distasonis (strain ATCC 8503 / DSM 20701 / CIP 104284 / JCM 5825 / NCTC 11152), this protein is D-aminoacyl-tRNA deacylase.